Here is a 475-residue protein sequence, read N- to C-terminus: Ankyrin repeat, SAM and basic leucine zipper domain-containing protein 1 (475 aa).

S17, S18, and S20 each carry phosphoserine. ANK repeat units lie at residues 45–74 (EKNETFKKALTTGDISLVQELLDSGISVES), 78–107 (YGWTPLMYAASVSNVELVRVLLDRGANASF), 110–144 (DKQTILITACSARGSEEQILKCVELLLSRNADPNV), 148–177 (RLMTPIMYAARDGHPQVVALLVAHGAEVNS), 181–210 (NGYTALTWAARQGHKNVVLKLLELGANKML), and 214–243 (DGKTPSEIAKRNKHLEIFNFLSLTLNPLEG). An SAM domain is found at 272-334 (SYTAFGDLEI…KILAALKELE (63 aa)).

In terms of assembly, interacts with DDX4, PIWIL1, RANBP9 and TDRD1.

The protein resides in the cytoplasm. Plays a central role during spermatogenesis by repressing transposable elements and preventing their mobilization, which is essential for the germline integrity. Acts via the piRNA metabolic process, which mediates the repression of transposable elements during meiosis by forming complexes composed of piRNAs and Piwi proteins and governs the methylation and subsequent repression of transposons. Its association with pi-bodies suggests a participation in the primary piRNAs metabolic process. Required prior to the pachytene stage to facilitate the production of multiple types of piRNAs, including those associated with repeats involved in the regulation of retrotransposons. May act by mediating protein-protein interactions during germ cell maturation. The chain is Ankyrin repeat, SAM and basic leucine zipper domain-containing protein 1 (ASZ1) from Mustela putorius furo (European domestic ferret).